We begin with the raw amino-acid sequence, 470 residues long: Neuraminidase (470 aa).

The Intravirion segment spans residues methionine 1–serine 14. An involved in apical transport and lipid raft association region spans residues glycine 11–threonine 32. A helical membrane pass occupies residues leucine 15–valine 35. The hypervariable stalk region stretch occupies residues threonine 32–threonine 86. Over leucine 36–methionine 470 the chain is Virion surface. Residues asparagine 42, asparagine 46, asparagine 54, and asparagine 84 are each glycosylated (N-linked (GlcNAc...) asparagine; by host). Residues leucine 89–methionine 470 are head of neuraminidase. Intrachain disulfides connect cysteine 90–cysteine 417, cysteine 122–cysteine 127, cysteine 182–cysteine 229, cysteine 231–cysteine 236, cysteine 277–cysteine 290, cysteine 279–cysteine 288, cysteine 316–cysteine 335, and cysteine 421–cysteine 446. A substrate-binding site is contributed by arginine 116. Residue asparagine 144 is glycosylated (N-linked (GlcNAc...) asparagine; by host). The active-site Proton donor/acceptor is the aspartate 149. Substrate is bound at residue arginine 150. Glutamate 275–glutamate 276 is a substrate binding site. Arginine 291 is a substrate binding site. A Ca(2+)-binding site is contributed by aspartate 292. An N-linked (GlcNAc...) asparagine; by host glycan is attached at asparagine 293. Positions 296 and 322 each coordinate Ca(2+). Residue arginine 368 participates in substrate binding. Residue asparagine 398 is glycosylated (N-linked (GlcNAc...) asparagine; by host). Tyrosine 402 functions as the Nucleophile in the catalytic mechanism.

The protein belongs to the glycosyl hydrolase 34 family. As to quaternary structure, homotetramer. It depends on Ca(2+) as a cofactor. Post-translationally, N-glycosylated.

It localises to the virion membrane. The protein localises to the host apical cell membrane. The enzyme catalyses Hydrolysis of alpha-(2-&gt;3)-, alpha-(2-&gt;6)-, alpha-(2-&gt;8)- glycosidic linkages of terminal sialic acid residues in oligosaccharides, glycoproteins, glycolipids, colominic acid and synthetic substrates.. Its activity is regulated as follows. Inhibited by the neuraminidase inhibitors zanamivir (Relenza) and oseltamivir (Tamiflu). These drugs interfere with the release of progeny virus from infected cells and are effective against all influenza strains. Resistance to neuraminidase inhibitors is quite rare. Catalyzes the removal of terminal sialic acid residues from viral and cellular glycoconjugates. Cleaves off the terminal sialic acids on the glycosylated HA during virus budding to facilitate virus release. Additionally helps virus spread through the circulation by further removing sialic acids from the cell surface. These cleavages prevent self-aggregation and ensure the efficient spread of the progeny virus from cell to cell. Otherwise, infection would be limited to one round of replication. Described as a receptor-destroying enzyme because it cleaves a terminal sialic acid from the cellular receptors. May facilitate viral invasion of the upper airways by cleaving the sialic acid moieties on the mucin of the airway epithelial cells. Likely to plays a role in the budding process through its association with lipid rafts during intracellular transport. May additionally display a raft-association independent effect on budding. Plays a role in the determination of host range restriction on replication and virulence. Sialidase activity in late endosome/lysosome traffic seems to enhance virus replication. This is Neuraminidase from Influenza A virus (strain A/Guinea fowl/New York/4-3587/1984 H3N8).